The sequence spans 110 residues: uncharacterized protein (110 aa).

It localises to the mitochondrion. This is an uncharacterized protein from Arabidopsis thaliana (Mouse-ear cress).